A 181-amino-acid polypeptide reads, in one-letter code: MHESQKKRWYVLQAFSGFESRVAQSIREHVKLNQMEDLFGEVMVPSQEVVEIRGGQRRKSEYKFFPGYVLIQMKMTDSTWHLIRNVPKVLGFIGGKSDKPSPISDKEVEIIINRLRKIGNKPRPKTLFEPGEMIRVNDGPFADFNGVVEEVDYEKSRLKVSVSIFGRSTPVELDFRQVEKN.

In terms of domain architecture, KOW spans 130-161 (PGEMIRVNDGPFADFNGVVEEVDYEKSRLKVS).

It belongs to the NusG family. Monomer. Interacts with the transcription termination factor Rho and with RNA polymerase.

Participates in transcription elongation, termination and antitermination. In the absence of Rho, increases the rate of transcription elongation by the RNA polymerase (RNAP), probably by partially suppressing pausing. In the presence of Rho, modulates most Rho-dependent termination events by interacting with the RNAP to render the complex more susceptible to the termination activity of Rho. May be required to overcome a kinetic limitation of Rho to function at certain terminators. Also involved in ribosomal RNA transcriptional antitermination. The chain is Transcription termination/antitermination protein NusG from Buchnera aphidicola subsp. Acyrthosiphon pisum (strain APS) (Acyrthosiphon pisum symbiotic bacterium).